The primary structure comprises 115 residues: Nitrogenase-stabilizing/protective protein NifW (115 aa).

It belongs to the NifW family. As to quaternary structure, homotrimer; associates with NifD.

Functionally, may protect the nitrogenase Fe-Mo protein from oxidative damage. The protein is Nitrogenase-stabilizing/protective protein NifW of Rhodopseudomonas palustris (strain BisB18).